Consider the following 178-residue polypeptide: Zinc finger protein ZAT11 (178 aa).

2 C2H2-type zinc fingers span residues 47–69 (FECKTCNKRFSSFQALGGHRASH) and 94–116 (HKCSICSQSFGTGQALGGHMRRH).

In terms of tissue distribution, expressed in leaves.

It is found in the nucleus. Probable transcription factor that may be involved in stress responses. The polypeptide is Zinc finger protein ZAT11 (ZAT11) (Arabidopsis thaliana (Mouse-ear cress)).